A 118-amino-acid chain; its full sequence is Large ribosomal subunit protein uL18 (118 aa).

The protein belongs to the universal ribosomal protein uL18 family. In terms of assembly, part of the 50S ribosomal subunit; part of the 5S rRNA/L5/L18/L25 subcomplex. Contacts the 5S and 23S rRNAs.

Functionally, this is one of the proteins that bind and probably mediate the attachment of the 5S RNA into the large ribosomal subunit, where it forms part of the central protuberance. This is Large ribosomal subunit protein uL18 from Rickettsia bellii (strain OSU 85-389).